A 161-amino-acid chain; its full sequence is Serine-protein kinase RsbW (161 aa).

This sequence belongs to the anti-sigma-factor family.

It carries out the reaction L-seryl-[protein] + ATP = O-phospho-L-seryl-[protein] + ADP + H(+). The catalysed reaction is L-threonyl-[protein] + ATP = O-phospho-L-threonyl-[protein] + ADP + H(+). Its function is as follows. Negative regulator of sigma-B activity. Phosphorylates and inactivates its specific antagonist protein, RsbV. Upon phosphorylation of RsbV, RsbW is released and binds to sigma-B, thereby blocking its ability to form an RNA polymerase holoenzyme (E-sigma-B). The protein is Serine-protein kinase RsbW of Bacillus licheniformis (strain ATCC 14580 / DSM 13 / JCM 2505 / CCUG 7422 / NBRC 12200 / NCIMB 9375 / NCTC 10341 / NRRL NRS-1264 / Gibson 46).